We begin with the raw amino-acid sequence, 223 residues long: MIF4G domain-containing protein A (223 aa).

In terms of domain architecture, MIF4G spans 7 to 206; that stretch reads QEDYKMQAFD…LEMIEYRAAG (200 aa).

This sequence belongs to the MIF4GD family. In terms of assembly, interacts with eif4g1, eif4g2 and slbp; probably tethered by SLBP to the 3'-end of mRNAs ending with the histone stem-loop, it also interacts with eif4g1 which is bound to their 5'-end.

It localises to the cytoplasm. It is found in the nucleus. Functionally, functions in replication-dependent translation of histone mRNAs which differ from other eukaryotic mRNAs in that they do not end with a poly-A tail but a stem-loop. May participate in circularizing those mRNAs specifically enhancing their translation. The polypeptide is MIF4G domain-containing protein A (mif4gd-a) (Xenopus laevis (African clawed frog)).